The primary structure comprises 156 residues: Prolamin PPROL 17D (156 aa).

The signal sequence occupies residues 1 to 19 (MKIIFFFALLAIAACSASA). Gln20 is modified (pyrrolidone carboxylic acid).

Belongs to the prolamin family.

The protein resides in the vacuole. It localises to the aleurone grain. Functionally, seed storage protein; serves as a source of nitrogen, carbon and sulfur for the young developing seedling. This Oryza sativa subsp. japonica (Rice) protein is Prolamin PPROL 17D.